A 398-amino-acid polypeptide reads, in one-letter code: Calreticulin (398 aa).

The first 19 residues, 1–19, serve as a signal peptide directing secretion; that stretch reads MKAVVLVVVSLLALSSINC. The N-domain stretch occupies residues 20-197; sequence DVFFEEKFPD…NEKVESGDLE (178 aa). Cysteines 105 and 137 form a disulfide. 4 residues coordinate an alpha-D-glucoside: tyrosine 109, lysine 111, tyrosine 128, and aspartate 135. 7 consecutive repeat copies span residues 191-202, 210-221, 227-238, 244-255, 259-269, 273-283, and 287-297. Positions 191 to 255 are 4 X approximate repeats; that stretch reads VESGDLEADW…DATKPEDWDD (65 aa). The segment at 198–308 is P-domain; that stretch reads ADWDFLPNKK…YTPDSNLYKR (111 aa). Positions 207 to 251 are enriched in basic and acidic residues; sequence KIKDPEAKKPEDWDDKPTIPDPEDKKPEDWDKPEHIPDPDATKPE. Residues 207-257 are disordered; sequence KIKDPEAKKPEDWDDKPTIPDPEDKKPEDWDKPEHIPDPDATKPEDWDDEM. Residues 259–297 are 3 X approximate repeats; the sequence is GEWEPPMIDNPDYKGVWAPKQIDNPAYKGPWVHPEIDNP. The tract at residues 309–398 is C-domain; the sequence is DEICAVGLDL…AAPVEEHDEL (90 aa). Aspartate 317 contacts an alpha-D-glucoside. Positions 334–398 are disordered; sequence DDPAAAKERG…AAPVEEHDEL (65 aa). Residues 337-372 show a composition bias toward basic and acidic residues; the sequence is AAAKERGEVIKKRQEGEKKMKSEQDEAEREKEKAEK. A compositionally biased stretch (acidic residues) spans 373–387; that stretch reads PDDEEDDEDLDDETG. The Prevents secretion from ER motif lies at 395 to 398; that stretch reads HDEL.

It belongs to the calreticulin family. In terms of assembly, monomer. As to expression, expressed in fat bodies. Not expressed in midgut, silk gland, ovary or testis.

It localises to the endoplasmic reticulum lumen. Functionally, molecular calcium-binding chaperone promoting folding, oligomeric assembly and quality control in the ER via the calreticulin/calnexin cycle. This lectin may interact transiently with almost all of the monoglucosylated glycoproteins that are synthesized in the ER. The chain is Calreticulin from Bombyx mori (Silk moth).